Here is a 170-residue protein sequence, read N- to C-terminus: Large ribosomal subunit protein uL10 (170 aa).

This sequence belongs to the universal ribosomal protein uL10 family. As to quaternary structure, part of the ribosomal stalk of the 50S ribosomal subunit. The N-terminus interacts with L11 and the large rRNA to form the base of the stalk. The C-terminus forms an elongated spine to which L12 dimers bind in a sequential fashion forming a multimeric L10(L12)X complex.

Forms part of the ribosomal stalk, playing a central role in the interaction of the ribosome with GTP-bound translation factors. This Lactobacillus helveticus (strain DPC 4571) protein is Large ribosomal subunit protein uL10.